The sequence spans 180 residues: UPF0149 protein XC_0904 (180 aa).

This sequence belongs to the UPF0149 family.

The sequence is that of UPF0149 protein XC_0904 from Xanthomonas campestris pv. campestris (strain 8004).